Here is a 105-residue protein sequence, read N- to C-terminus: MQRIKQGDDVIVTAGKDKGRRGTVVKVLTDDRVVVQNINMVKKHQKPNPTAGQPGGIIDKEMPIHVSNVMLFNPAKGKGDRVGFKTLEDGRKVRYFKSDNEVVDA.

It belongs to the universal ribosomal protein uL24 family. In terms of assembly, part of the 50S ribosomal subunit.

Its function is as follows. One of two assembly initiator proteins, it binds directly to the 5'-end of the 23S rRNA, where it nucleates assembly of the 50S subunit. One of the proteins that surrounds the polypeptide exit tunnel on the outside of the subunit. This Thioalkalivibrio sulfidiphilus (strain HL-EbGR7) protein is Large ribosomal subunit protein uL24.